The following is a 289-amino-acid chain: Thymidylate synthase (289 aa).

DUMP-binding positions include Arg-21 and 150–151 (RR). Cys-170 serves as the catalytic Nucleophile. DUMP contacts are provided by residues 191-194 (RSAD), Asn-202, and 232-234 (HIY). Asp-194 contributes to the (6R)-5,10-methylene-5,6,7,8-tetrahydrofolate binding site. Position 288 (Ala-288) interacts with (6R)-5,10-methylene-5,6,7,8-tetrahydrofolate.

The protein belongs to the thymidylate synthase family. Bacterial-type ThyA subfamily. Homodimer.

It localises to the cytoplasm. It carries out the reaction dUMP + (6R)-5,10-methylene-5,6,7,8-tetrahydrofolate = 7,8-dihydrofolate + dTMP. The protein operates within pyrimidine metabolism; dTTP biosynthesis. Functionally, catalyzes the reductive methylation of 2'-deoxyuridine-5'-monophosphate (dUMP) to 2'-deoxythymidine-5'-monophosphate (dTMP) while utilizing 5,10-methylenetetrahydrofolate (mTHF) as the methyl donor and reductant in the reaction, yielding dihydrofolate (DHF) as a by-product. This enzymatic reaction provides an intracellular de novo source of dTMP, an essential precursor for DNA biosynthesis. The polypeptide is Thymidylate synthase (Malacoplasma penetrans (strain HF-2) (Mycoplasma penetrans)).